A 237-amino-acid chain; its full sequence is tRNA (guanine-N(7)-)-methyltransferase (237 aa).

Residues E68, E93, D120, and D143 each contribute to the S-adenosyl-L-methionine site. The active site involves D143. Residues K147, D179, and 216-219 (TKFE) each bind substrate.

The protein belongs to the class I-like SAM-binding methyltransferase superfamily. TrmB family.

The catalysed reaction is guanosine(46) in tRNA + S-adenosyl-L-methionine = N(7)-methylguanosine(46) in tRNA + S-adenosyl-L-homocysteine. It functions in the pathway tRNA modification; N(7)-methylguanine-tRNA biosynthesis. Functionally, catalyzes the formation of N(7)-methylguanine at position 46 (m7G46) in tRNA. This is tRNA (guanine-N(7)-)-methyltransferase from Shewanella piezotolerans (strain WP3 / JCM 13877).